Here is a 1062-residue protein sequence, read N- to C-terminus: Isoleucine--tRNA ligase (1062 aa).

Positions 47–57 (PYTTGHIHLGT) match the 'HIGH' region motif. The short motif at 591-595 (KMSKS) is the 'KMSKS' region element. Lys594 contacts ATP.

It belongs to the class-I aminoacyl-tRNA synthetase family. IleS type 2 subfamily. In terms of assembly, monomer. The cofactor is Zn(2+).

The protein localises to the cytoplasm. The enzyme catalyses tRNA(Ile) + L-isoleucine + ATP = L-isoleucyl-tRNA(Ile) + AMP + diphosphate. Catalyzes the attachment of isoleucine to tRNA(Ile). As IleRS can inadvertently accommodate and process structurally similar amino acids such as valine, to avoid such errors it has two additional distinct tRNA(Ile)-dependent editing activities. One activity is designated as 'pretransfer' editing and involves the hydrolysis of activated Val-AMP. The other activity is designated 'posttransfer' editing and involves deacylation of mischarged Val-tRNA(Ile). This Methanospirillum hungatei JF-1 (strain ATCC 27890 / DSM 864 / NBRC 100397 / JF-1) protein is Isoleucine--tRNA ligase.